The following is a 384-amino-acid chain: MELQEVLHMNGGEGDTSYAKNSFYNLFLIRVKPILEQCIQELLRANLPNINKCIKVADLGCASGPNTLLTVRDIVQSIDKVGQEKKNELERPTIQIFLNDLFQNDFNSVFKSLPSFYRKLEKENGCKIGSCLIGAMPGSFYGRLFPEESMHFLHSCYCLHWLSQVPSGLVTELGISANKGCIYSSKASRPPIQKAYLDQFTKDFTTFLRIHSEELISRGRMLLTWICKEDEFENPNSIDLLEMSINDLVIEGHLEEEKLDSFNVPIYAPSTEEVKCIVEEEGSFEILYLETFKVPYDAGFSIDDDYQGRSHSPVSCDEHARAAHVASVVRSIFEPIVASHFGEAILPDLSHRIAKNAAKVLRSGKGFYDSVIISLAKKPEKADM.

S-adenosyl-L-homocysteine is bound by residues Tyr-18, Cys-61, Asn-66, Asp-100, Leu-101, Ser-139, Phe-140, and Cys-156. Residue Tyr-157 coordinates theobromine. An S-adenosyl-L-homocysteine-binding site is contributed by Cys-158. Theobromine contacts are provided by His-160 and Trp-161. Asn-178 serves as a coordination point for Mg(2+). Theobromine is bound at residue Ser-237. Positions 260, 262, and 263 each coordinate Mg(2+). Tyr-368 contributes to the theobromine binding site.

Belongs to the methyltransferase superfamily. Type-7 methyltransferase family. Mg(2+) is required as a cofactor. In terms of tissue distribution, highly expressed in developing endosperm and immature fruits (grains). Detected in young leaves and flower buds, but not in mature fruits.

The enzyme catalyses theobromine + S-adenosyl-L-methionine = caffeine + S-adenosyl-L-homocysteine + H(+). It catalyses the reaction 1,7-dimethylxanthine + S-adenosyl-L-methionine = caffeine + S-adenosyl-L-homocysteine + H(+). It carries out the reaction 7-methylxanthine + S-adenosyl-L-methionine = theobromine + S-adenosyl-L-homocysteine + H(+). The protein operates within alkaloid biosynthesis. Functionally, involved in the biosynthesis of caffeine. Catalyzes the conversion of 7-methylxanthine to caffeine, likely via theobromine as an intermediate. The polypeptide is 3,7-dimethylxanthine N-methyltransferase 1 (Coffea arabica (Arabian coffee)).